The sequence spans 74 residues: uncharacterized protein (74 aa).

This is an uncharacterized protein from Saccharomyces cerevisiae (strain ATCC 204508 / S288c) (Baker's yeast).